An 827-amino-acid chain; its full sequence is Glycerol-3-phosphate acyltransferase (827 aa).

The HXXXXD motif signature appears at 325–330; the sequence is CHRSHM.

This sequence belongs to the GPAT/DAPAT family.

The protein resides in the cell inner membrane. The catalysed reaction is sn-glycerol 3-phosphate + an acyl-CoA = a 1-acyl-sn-glycero-3-phosphate + CoA. The protein operates within phospholipid metabolism; CDP-diacylglycerol biosynthesis; CDP-diacylglycerol from sn-glycerol 3-phosphate: step 1/3. The polypeptide is Glycerol-3-phosphate acyltransferase (Escherichia coli (strain SMS-3-5 / SECEC)).